A 738-amino-acid polypeptide reads, in one-letter code: Dipeptidyl peptidase 3 (738 aa).

The residue at position 2 (alanine 2) is an N-acetylalanine. Histidine 450 contacts Zn(2+). Glutamate 451 is an active-site residue. 2 residues coordinate Zn(2+): histidine 455 and glutamate 508.

Belongs to the peptidase M49 family. Zn(2+) is required as a cofactor.

It localises to the cytoplasm. It catalyses the reaction Release of an N-terminal dipeptide from a peptide comprising four or more residues, with broad specificity. Also acts on dipeptidyl 2-naphthylamides.. Inhibited by spinorphin, an opioid peptide derived from hemoglobin. Its function is as follows. Cleaves and degrades bioactive peptides, including angiotensin, Leu-enkephalin and Met-enkephalin. Also cleaves Arg-Arg-beta-naphthylamide. The chain is Dipeptidyl peptidase 3 (Dpp3) from Rattus norvegicus (Rat).